Consider the following 105-residue polypeptide: Thioredoxin (105 aa).

In terms of domain architecture, Thioredoxin spans 1–105 (MVNNVTDSSF…SLLDWINKSI (105 aa)). C30 and C33 are joined by a disulfide.

It belongs to the thioredoxin family.

Its function is as follows. Component of the thioredoxin-thioredoxin reductase system. Participates in various redox reactions through the reversible oxidation of its active center dithiol to a disulfide and catalyzes dithiol-disulfide exchange reactions. The chain is Thioredoxin (trxA) from Rickettsia prowazekii (strain Madrid E).